We begin with the raw amino-acid sequence, 395 residues long: Receptor-like cytoplasmic kinase 176 (395 aa).

Residues 1-45 (MGNCWGAKISSESPCRSASSPSGGTSKYASNSSVSAASVPPTPRS) form a disordered region. Composition is skewed to low complexity over residues 10–22 (SSESPCRSASSPS) and 29–39 (ASNSSVSAASV). A Protein kinase domain is found at 70–355 (FRPDSVLGEG…EQVVAVLEQL (286 aa)). Residues 76 to 84 (LGEGGFGSV) and lysine 108 each bind ATP. Aspartate 205 acts as the Proton acceptor in catalysis. The segment at 359 to 395 (KETGANPQLQKKSSSKNAGSNGSKPSSKGKPANARLV) is disordered. A compositionally biased stretch (low complexity) spans 369–395 (KKSSSKNAGSNGSKPSSKGKPANARLV).

It belongs to the protein kinase superfamily. Ser/Thr protein kinase family. As to quaternary structure, interacts with CERK1.

The enzyme catalyses L-seryl-[protein] + ATP = O-phospho-L-seryl-[protein] + ADP + H(+). It catalyses the reaction L-threonyl-[protein] + ATP = O-phospho-L-threonyl-[protein] + ADP + H(+). Functionally, functions downstream of CERK1 in the microbial peptidoglycans (PGNs) and fungal chitin signaling pathways that mediate innate immunity. Participates in the activation of defense genes during response to PGN and chitin. The protein is Receptor-like cytoplasmic kinase 176 of Oryza sativa subsp. japonica (Rice).